A 341-amino-acid polypeptide reads, in one-letter code: UDP-glucose 4-epimerase (341 aa).

It belongs to the polysaccharide synthase family.

It carries out the reaction UDP-alpha-D-glucose = UDP-alpha-D-galactose. In terms of biological role, epimerizes UDP-galactose to UDP-glucose. The chain is UDP-glucose 4-epimerase (capD) from Rickettsia canadensis (strain McKiel).